The chain runs to 397 residues: MHPYLTGNIPGTGGIFKETPEDFLVTEIPIYTPCGEGEHIYAEIEKRGITTLEAIRRLAKALGIGERDVGYAGMKDAKGITRQTISLPRVAPEQVLGLELPGIKVLSAVPHRNKLKVGHLRGNRFRIRIGGVGADAATIAIAVLDILEKRGVPNFFGEQRYGAQGNSHLIGGAILRNDYRGAVDALIGEPDKVTDERWRRAIEAFKAGDLAKSLETFPPHCRTERELLQKLVKQPEAHEKAFRAVHPRLRKLYLSAFQADLFDRVVQQRMDSLDQVVHGDVAFKHDNGACFLVTDAAAEAPRAAAFEISATGPMFGCRMKEPEGETLAMERRLLETEDLTLPSFDLEGGLRMEGERRPLRVPIAEIGVEADGAGLFLEFSLPKGSYATTVLREVMKS.

Aspartate 76 acts as the Nucleophile in catalysis. The TRUD domain maps to 151–361; the sequence is GVPNFFGEQR…MEGERRPLRV (211 aa).

It belongs to the pseudouridine synthase TruD family.

The enzyme catalyses uridine(13) in tRNA = pseudouridine(13) in tRNA. Responsible for synthesis of pseudouridine from uracil-13 in transfer RNAs. In Geotalea daltonii (strain DSM 22248 / JCM 15807 / FRC-32) (Geobacter daltonii), this protein is tRNA pseudouridine synthase D.